The sequence spans 155 residues: NADPH-dependent 7-cyano-7-deazaguanine reductase (155 aa).

C53 (thioimide intermediate) is an active-site residue. D60 functions as the Proton donor in the catalytic mechanism. Substrate-binding positions include V75–S77 and H94–E95.

This sequence belongs to the GTP cyclohydrolase I family. QueF type 1 subfamily.

The protein resides in the cytoplasm. It carries out the reaction 7-aminomethyl-7-carbaguanine + 2 NADP(+) = 7-cyano-7-deazaguanine + 2 NADPH + 3 H(+). The protein operates within tRNA modification; tRNA-queuosine biosynthesis. In terms of biological role, catalyzes the NADPH-dependent reduction of 7-cyano-7-deazaguanine (preQ0) to 7-aminomethyl-7-deazaguanine (preQ1). The sequence is that of NADPH-dependent 7-cyano-7-deazaguanine reductase from Brucella abortus (strain S19).